A 732-amino-acid chain; its full sequence is Elongation factor 2 (732 aa).

One can recognise a tr-type G domain in the interval E19–T230. GTP is bound by residues A28–T35, D94–H98, and N148–D151. Diphthamide is present on H597.

Belongs to the TRAFAC class translation factor GTPase superfamily. Classic translation factor GTPase family. EF-G/EF-2 subfamily.

Its subcellular location is the cytoplasm. Functionally, catalyzes the GTP-dependent ribosomal translocation step during translation elongation. During this step, the ribosome changes from the pre-translocational (PRE) to the post-translocational (POST) state as the newly formed A-site-bound peptidyl-tRNA and P-site-bound deacylated tRNA move to the P and E sites, respectively. Catalyzes the coordinated movement of the two tRNA molecules, the mRNA and conformational changes in the ribosome. The chain is Elongation factor 2 from Thermococcus sibiricus (strain DSM 12597 / MM 739).